Reading from the N-terminus, the 724-residue chain is Tripartite terminase subunit 1 (724 aa).

The C3H1-type zinc finger occupies 175–203 (CAVCFEELCVTANQGEATHRRLLGCVCDH). The tract at residues 410–445 (GGDDADADGGAAGGADAGDGGVGDEDGPGAPPPADA) is disordered. The span at 419–430 (GAAGGADAGDGG) shows a compositional bias: gly residues. 652 to 659 (FRSVFHCG) serves as a coordination point for ATP.

Belongs to the herpesviridae TRM1 protein family. In terms of assembly, associates with TRM2 and TRM3 to form the tripartite terminase complex. Interacts with portal protein.

The protein resides in the host nucleus. In terms of biological role, component of the molecular motor that translocates viral genomic DNA in empty capsid during DNA packaging. Forms a tripartite terminase complex together with TRM2 and TRM3 in the host cytoplasm. Once the complex reaches the host nucleus, it interacts with the capsid portal vertex. This portal forms a ring in which genomic DNA is translocated into the capsid. TRM1 carries an endonuclease activity that plays an important role for the cleavage of concatemeric viral DNA into unit length genomes. In Suid herpesvirus 1 (strain Indiana-Funkhauser / Becker) (SuHV-1), this protein is Tripartite terminase subunit 1.